A 772-amino-acid polypeptide reads, in one-letter code: Calcium-binding mitochondrial carrier protein (772 aa).

Positions 1–377 (MFANRVRQAQ…SISDFEKSTG (377 aa)) are N-terminal domain. EF-hand domains follow at residues 132–165 (LDAD…ELMA), 166–201 (KPEA…SLDP), 235–270 (LQQE…VKLR), and 347–382 (ITPL…NINK). Ca(2+) is bound by residues Asp145, Asp147, Thr149, Tyr151, Glu156, Asp179, Asp181, Asn183, Tyr185, and Asp190. Positions 360, 362, 364, 366, and 371 each coordinate Ca(2+). Residues 378 to 422 (LNINKIGGGTNYSDSYPSDSHVTIQNSSTTPSPSTPITNTAAAIA) form a linker loop domain region. Residues 432–720 (AQQVLESIEN…KALLPDAEYK (289 aa)) form a carrier domain region. 3 Solcar repeats span residues 436 to 526 (LESI…LRDL), 535 to 616 (IYFP…MKTI), and 624 to 712 (LGPM…LQKA). 6 consecutive transmembrane segments (helical) span residues 442–459 (FALG…VYPI), 501–520 (GILP…LTVN), 545–558 (GFAG…TNPL), 591–610 (GAGA…FPTY), 630–647 (LLAG…VTPA), and 687–706 (GALA…LVSY). Residues 721 to 772 (PPTNAPITQKDFDVIRGNTNTVQRVIDMESKFGTLHQTRDNNKSSNGGENKN) form a C-terminal domain region. The tract at residues 751-772 (KFGTLHQTRDNNKSSNGGENKN) is disordered. Residues 763-772 (KSSNGGENKN) are compositionally biased toward low complexity.

Belongs to the mitochondrial carrier (TC 2.A.29) family. Homodimer (via N-terminus).

Its subcellular location is the mitochondrion inner membrane. Its function is as follows. Mitochondrial and calcium-binding carrier that catalyzes the calcium-dependent exchange of cytoplasmic glutamate with mitochondrial aspartate across the mitochondrial inner membrane. The chain is Calcium-binding mitochondrial carrier protein (mcfO) from Dictyostelium discoideum (Social amoeba).